The sequence spans 160 residues: Cyclic pyranopterin monophosphate synthase (160 aa).

Substrate is bound by residues 75-77 and 113-114; these read LCH and ME. Aspartate 128 is a catalytic residue.

Belongs to the MoaC family. As to quaternary structure, homohexamer; trimer of dimers.

It carries out the reaction (8S)-3',8-cyclo-7,8-dihydroguanosine 5'-triphosphate = cyclic pyranopterin phosphate + diphosphate. Its pathway is cofactor biosynthesis; molybdopterin biosynthesis. In terms of biological role, catalyzes the conversion of (8S)-3',8-cyclo-7,8-dihydroguanosine 5'-triphosphate to cyclic pyranopterin monophosphate (cPMP). This is Cyclic pyranopterin monophosphate synthase from Methylobacterium nodulans (strain LMG 21967 / CNCM I-2342 / ORS 2060).